We begin with the raw amino-acid sequence, 503 residues long: Ell-associated factor Eaf (503 aa).

Polar residues-rich tracts occupy residues 119 to 145 (TRNE…NQGA) and 167 to 186 (ENST…SRRN). Disordered regions lie at residues 119-220 (TRNE…PAWD), 250-360 (GHAN…SQSV), and 372-503 (GGVL…DDDD). Phosphoserine is present on S196. Residues 202–215 (SPSRPVPVHRSPQS) show a composition bias toward low complexity. Composition is skewed to polar residues over residues 250–273 (GHAN…STHI) and 298–307 (MAQQQQQHPS). Positions 308-337 (NYGRGYNGGHNHAQQQQQQQRNSPPRQRPS) are enriched in low complexity. Positions 385-400 (DSSDSDSGSDSDDSTE) are enriched in acidic residues. 3 stretches are compositionally biased toward low complexity: residues 406 to 437 (QGQQ…HHNQ), 454 to 472 (HQQQ…QKQQ), and 487 to 497 (LQNDLQLSSNS).

This sequence belongs to the EAF family.

It localises to the nucleus. Promotes transcriptional elongation by Su(Tpl)/ELL. Essential for development. In Drosophila sechellia (Fruit fly), this protein is Ell-associated factor Eaf.